A 500-amino-acid chain; its full sequence is NAD(P)H-quinone oxidoreductase chain 4, chloroplastic (500 aa).

Transmembrane regions (helical) follow at residues 3-23, 37-57, 84-104, 111-129, 134-154, 167-187, 208-228, 242-262, 272-292, 305-325, 330-350, 386-406, 416-436, and 462-482; these read FFPW…VIFF, ICIC…HFQF, GLSI…TLAA, SRLF…IGSF, LLLF…LLSI, FILY…GVGL, ALEI…SPII, HYST…YGLI, AHSI…IYAA, IAYS…SITD, GAIL…FLAG, LALP…GIIT, ILIT…SLSM, and LFVS…PDFV.

The protein belongs to the complex I subunit 4 family.

Its subcellular location is the plastid. The protein resides in the chloroplast thylakoid membrane. It carries out the reaction a plastoquinone + NADH + (n+1) H(+)(in) = a plastoquinol + NAD(+) + n H(+)(out). It catalyses the reaction a plastoquinone + NADPH + (n+1) H(+)(in) = a plastoquinol + NADP(+) + n H(+)(out). This chain is NAD(P)H-quinone oxidoreductase chain 4, chloroplastic, found in Panax ginseng (Korean ginseng).